The following is a 30-amino-acid chain: Kalata-B14 (30 aa).

A cross-link (cyclopeptide (Gly-Asp)) is located at residues 1–30 (GLPVCGESCFGGTCNTPGCACDPWPVCTRD). 3 cysteine pairs are disulfide-bonded: C5-C19, C9-C21, and C14-C27.

Post-translationally, this is a cyclic peptide.

Functionally, probably participates in a plant defense mechanism. This chain is Kalata-B14, found in Oldenlandia affinis.